The following is a 638-amino-acid chain: DNA repair protein rhp41 (638 aa).

This sequence belongs to the XPC family.

The protein localises to the nucleus. Functionally, has a role in the nucleotide excision repair (NER) pathway. Acts in both transcription-coupled repair (TCR) which removes damage from the transcribed strand of active genes and in global genome repair (GGR) which removes damage in untranscribed DNA. Involved in the repair of UV-induced damages where it is involved in the removal of cyclobutane pyrimidine dimers (CPDs). In Schizosaccharomyces pombe (strain 972 / ATCC 24843) (Fission yeast), this protein is DNA repair protein rhp41 (rhp41).